The sequence spans 390 residues: Endonuclease 8-like 1 (390 aa).

The active-site Schiff-base intermediate with DNA is the P2. E3 functions as the Proton donor in the catalytic mechanism. Catalysis depends on K54, which acts as the Proton donor; for beta-elimination activity. Residue N176 coordinates DNA. A disordered region spans residues 278 to 390 (TIWFQGDPGP…SLEPEGTSAS (113 aa)). Basic residues predominate over residues 291-301 (KGRKSRKKKSK). Over residues 335–347 (TATQRPEGTSLQQ) the composition is skewed to polar residues. R339 serves as a coordination point for DNA. Catalysis depends on R339, which acts as the Proton donor; for delta-elimination activity.

It belongs to the FPG family. As to expression, ubiquitous.

Its subcellular location is the cytoplasm. The protein resides in the cytoskeleton. It localises to the microtubule organizing center. The protein localises to the centrosome. It is found in the nucleus. Its subcellular location is the chromosome. It catalyses the reaction 2'-deoxyribonucleotide-(2'-deoxyribose 5'-phosphate)-2'-deoxyribonucleotide-DNA = a 3'-end 2'-deoxyribonucleotide-(2,3-dehydro-2,3-deoxyribose 5'-phosphate)-DNA + a 5'-end 5'-phospho-2'-deoxyribonucleoside-DNA + H(+). Involved in base excision repair of DNA damaged by oxidation or by mutagenic agents. Acts as a DNA glycosylase that recognizes and removes damaged bases. Has a preference for oxidized pyrimidines, such as thymine glycol, formamidopyrimidine (Fapy) and 5-hydroxyuracil. Has marginal activity towards 8-oxoguanine. Has AP (apurinic/apyrimidinic) lyase activity and introduces nicks in the DNA strand. Cleaves the DNA backbone by beta-delta elimination to generate a single-strand break at the site of the removed base with both 3'- and 5'-phosphates. Has DNA glycosylase/lyase activity towards mismatched uracil and thymine, in particular in U:C and T:C mismatches. Specifically binds 5-hydroxymethylcytosine (5hmC), suggesting that it acts as a specific reader of 5hmC. The polypeptide is Endonuclease 8-like 1 (NEIL1) (Homo sapiens (Human)).